A 310-amino-acid polypeptide reads, in one-letter code: tRNA dimethylallyltransferase (310 aa).

15 to 22 (GATASGKT) is a binding site for ATP. Residue 17-22 (TASGKT) coordinates substrate.

It belongs to the IPP transferase family. Monomer. The cofactor is Mg(2+).

The catalysed reaction is adenosine(37) in tRNA + dimethylallyl diphosphate = N(6)-dimethylallyladenosine(37) in tRNA + diphosphate. Its function is as follows. Catalyzes the transfer of a dimethylallyl group onto the adenine at position 37 in tRNAs that read codons beginning with uridine, leading to the formation of N6-(dimethylallyl)adenosine (i(6)A). The chain is tRNA dimethylallyltransferase from Nocardioides sp. (strain ATCC BAA-499 / JS614).